A 364-amino-acid polypeptide reads, in one-letter code: GTPase Obg (364 aa).

One can recognise an Obg domain in the interval methionine 1–isoleucine 159. The OBG-type G domain occupies alanine 160–valine 327. Residues glycine 166–serine 173, phenylalanine 191–histidine 195, aspartate 212–glycine 215, serine 279–aspartate 282, and serine 308–valine 310 each bind GTP. Mg(2+) contacts are provided by serine 173 and threonine 193. Positions glutamate 333–proline 364 are disordered.

This sequence belongs to the TRAFAC class OBG-HflX-like GTPase superfamily. OBG GTPase family. As to quaternary structure, monomer. Mg(2+) is required as a cofactor.

The protein resides in the cytoplasm. In terms of biological role, an essential GTPase which binds GTP, GDP and possibly (p)ppGpp with moderate affinity, with high nucleotide exchange rates and a fairly low GTP hydrolysis rate. Plays a role in control of the cell cycle, stress response, ribosome biogenesis and in those bacteria that undergo differentiation, in morphogenesis control. The chain is GTPase Obg from Rhizobium johnstonii (strain DSM 114642 / LMG 32736 / 3841) (Rhizobium leguminosarum bv. viciae).